The following is a 531-amino-acid chain: Protein arginine N-methyltransferase 3 (531 aa).

A disordered region spans residues 1–43; the sequence is MCSLASGATGGRGAVENEEDLPELSDSGDEAAWEDEDDADLPH. N-acetylcysteine is present on cysteine 2. The span at 16-39 shows a compositional bias: acidic residues; that stretch reads ENEEDLPELSDSGDEAAWEDEDDA. Serine 25 and serine 27 each carry phosphoserine. Residues 48–71 form a C2H2-type zinc finger; it reads TPCLFCNRLFTSAEETFSHCKSEH. The segment at 48-71 is interaction with ZNF200; it reads TPCLFCNRLFTSAEETFSHCKSEH. Serine 171 is subject to Phosphoserine. The mediates interaction with ALDH1A1 stretch occupies residues 186–531; that stretch reads MKQFAQDFVM…NNSTQTYGLQ (346 aa). Positions 217 to 531 constitute an SAM-dependent MTase PRMT-type domain; sequence DGVYFSSYGH…NNSTQTYGLQ (315 aa). S-adenosyl-L-homocysteine is bound by residues arginine 239, glycine 263, aspartate 285, isoleucine 313, and glutamate 314. Active-site residues include glutamate 329 and glutamate 338. S-adenosyl-L-homocysteine is bound at residue serine 343.

This sequence belongs to the class I-like SAM-binding methyltransferase superfamily. Protein arginine N-methyltransferase family. In terms of assembly, monomer and homodimer. Interacts with EPB41L3 (via FERM domain); the interaction is direct and inhibits the protein-arginine N-methyltransferase activity of PRMT3. Interacts with the 40S ribosomal protein RPS2. Interacts with ALDH1A1; the interaction is direct, inhibits ALDH1A1 aldehyde dehydrogenase activity and is independent of the methyltransferase activity of PRMT3. Interacts (via zinc-finger) with ZNF200 (via C-terminus); the interaction is direct and required to localize PRMT3 to the nucleus and inhibit its proteasomal degradation.

The protein localises to the cytoplasm. It localises to the cytosol. The protein resides in the nucleus. The catalysed reaction is L-arginyl-[protein] + S-adenosyl-L-methionine = N(omega)-methyl-L-arginyl-[protein] + S-adenosyl-L-homocysteine + H(+). It carries out the reaction L-arginyl-[protein] + 2 S-adenosyl-L-methionine = N(omega),N(omega)-dimethyl-L-arginyl-[protein] + 2 S-adenosyl-L-homocysteine + 2 H(+). Its activity is regulated as follows. Inhibited by N-ethylmaleimide and high concentrations of zinc chloride. Allosterically inhibited by SGC707. Allosterically inhibited by (1-(benzo[d][1,2,3]thiadiazol- 6-yl)-3-(2-cyclohexenylethyl)urea) and derivatives thereof. Its function is as follows. Protein-arginine N-methyltransferase that catalyzes both the monomethylation and asymmetric dimethylation of the guanidino nitrogens of arginine residues in target proteins, and therefore falls into the group of type I methyltransferases. Catalyzes the asymmetric arginine dimethylation at multiple sites in the Arg/Gly-rich region of small ribosomal subunit protein uS5/RPS2. Also appears to methylate other ribosomal proteins. May regulate retinoic acid synthesis and signaling by inhibiting ALDH1A1 retinal dehydrogenase activity. Contributes to methylation of histone H4 'Arg-3', a specific tag for epigenetic transcriptional activation. Mediates asymmetric arginine dimethylation of histone H4 'Arg-3' (H4R3me2a) in the promoter region of miRNA miR-3648, to promote its transcription and osteogenesis. The chain is Protein arginine N-methyltransferase 3 from Homo sapiens (Human).